A 529-amino-acid polypeptide reads, in one-letter code: Fibroblast growth factor receptor-like 1 (529 aa).

The first 20 residues, 1–20, serve as a signal peptide directing secretion; it reads MTRSPALLLLLLGALPSAEA. Topologically, residues 21-374 are extracellular; it reads ARGPPRMADK…SSSSTSLPWP (354 aa). Ig-like C2-type domains follow at residues 25–111, 143–233, and 242–350; these read PRMA…YTLI, PRFT…YKVD, and PVLT…AFLT. The cysteines at positions 47 and 95 are disulfide-linked. Asparagine 107 carries N-linked (GlcNAc...) asparagine glycosylation. The disordered stretch occupies residues 116 to 151; sequence ISPGKESPGPGGSSGGQEDPASQQWARPRFTQPSKM. Cysteine 168 and cysteine 217 are joined by a disulfide. Residues asparagine 227, asparagine 251, and asparagine 289 are each glycosylated (N-linked (GlcNAc...) asparagine). A disulfide bridge connects residues cysteine 264 and cysteine 334. The helical transmembrane segment at 375–395 threads the bilayer; it reads VVIGIPAGAVFILGTVLLWLC. Topologically, residues 396 to 529 are cytoplasmic; that stretch reads QTKKKPCAPA…RIENNGGRVS (134 aa). Residues 405 to 427 form a disordered region; the sequence is ASTLPVPGHRPPGTSRERSGDKD.

As to quaternary structure, interacts with FGF2 with a low affinity. As to expression, highly expressed in the kidney, brain and lung. Weakly expressed in the muscle, thymus, lymph node, stomach, intestine, colon and liver. Expressed in fetal cartilaginous structures like the nasal cartilage, the ribs and the sternum as well as in the cartilaginous rudiments of developing bones such as the vertebrae and the pelvic bone. High expression is found in the muscles of the tongue and the diaphragm.

The protein localises to the cell membrane. Has a negative effect on cell proliferation. The sequence is that of Fibroblast growth factor receptor-like 1 (Fgfrl1) from Mus musculus (Mouse).